Consider the following 96-residue polypeptide: Evasin P1100 (96 aa).

The first 28 residues, 1-28 (MAFNVITFLQFSVFVVILFNINLHSASA), serve as a signal peptide directing secretion. 3 disulfides stabilise this stretch: C48–C67, C52–C69, and C63–C80. N51 carries N-linked (GlcNAc...) asparagine glycosylation. The N-linked (GlcNAc...) asparagine glycan is linked to N74.

The protein localises to the secreted. Salivary chemokine-binding protein which binds to host chemokines CXCL1, CXCL2, CXCL3, CXCL5, CXCL6, CXCL10, CXCL11 and CXCL13. The polypeptide is Evasin P1100 (Ixodes ricinus (Common tick)).